The sequence spans 612 residues: MKMDKKTIVWFRRDLRIEDNPALAAAAHEGSVFPVFIWCPEEEGQFYPGRASRWWMKQSLAHLSQSLKALGSDLTLIKTHNTISAILDCIRVTGATKVVFNHLYDPVSLVRDHTVKEKLVERGISVQSYNGDLLYEPWEIYCEKGKPFTSFNSYWKKCLDMSIESVMLPPPWRLMPITAAAEAIWACSIEELGLENEAEKPSNALLTRAWSPGWSNADKLLNEFIEKQLIDYAKNSKKVVGNSTSLLSPYLHFGEISVRHVFQCARMKQIIWARDKNSEGEESADLFLRGIGLREYSRYICFNFPFTHEQSLLSHLRFFPWDADVDKFKAWRQGRTGYPLVDAGMRELWATGWMHNRIRVIVSSFAVKFLLLPWKWGMKYFWDTLLDADLECDILGWQYISGSIPDGHELDRLDNPALQGAKYDPEGEYIRQWLPELARLPTEWIHHPWDAPLTVLKASGVELGTNYAKPIVDIDTARELLAKAISRTREAQIMIGAAPDEIVADSFEALGANTIKEPGLCPSVSSNDQQVPSAVRYNGSKRVKPEEEEERDMKKSRGFDERELFSTAESSSSSSVFFVSQSCSLASEGKNLEGIQDSSDQITTSLGKNGCK.

Residues 1–485 form a CNT2, binds chromophores to sense blue light and mediate CRY dimerization region; sequence MKMDKKTIVW…TARELLAKAI (485 aa). Residues 5 to 134 form the Photolyase/cryptochrome alpha/beta domain; the sequence is KKTIVWFRRD…SVQSYNGDLL (130 aa). Y232 lines the FAD pocket. 2 residues coordinate Mg(2+): N235 and S243. 244 to 248 serves as a coordination point for FAD; sequence TSLLS. H355 is a Mg(2+) binding site. FAD-binding positions include N356 and 387 to 389; that span reads DAD. An ATP-binding site is contributed by 356-357; sequence NR. D406 lines the ATP pocket. Residues 486–612 form a CCT2/CCE2, mediates blue light signaling region; sequence SRTREAQIMI…TTSLGKNGCK (127 aa). The segment at 539–576 is disordered; sequence GSKRVKPEEEEERDMKKSRGFDERELFSTAESSSSSSV. Positions 541–555 match the Nuclear localization signal motif; the sequence is KRVKPEEEEERDMKK. Residues 551-564 show a composition bias toward basic and acidic residues; it reads RDMKKSRGFDEREL. A Phosphoserine; by CK1 modification is found at S587. The segment at 590-612 is disordered; sequence KNLEGIQDSSDQITTSLGKNGCK. Over residues 596–612 the composition is skewed to polar residues; sequence QDSSDQITTSLGKNGCK. Phosphoserine occurs at positions 598 and 599. At T603 the chain carries Phosphothreonine; by CK1. Residue S605 is modified to Phosphoserine.

The protein belongs to the DNA photolyase class-1 family. Homodimer. Blue-light dependent dimerization. Interacts with COP1 and PHYB in the nucleus. Binds reversibly to CIBs proteins such as BHLH63/CIB1, BHLH78/CIB2, BHLH74/CIB4 and BHLH76/CIB5 after blue light illumination to stimulate their transcription factor activities. Interacts with PIF4 and PIF5 in the nucleus in response to low blue light (LBL). Binds to SPA1 in response to blue light, this interaction prevents SPA1/COP1 complex formation but stimulates interaction with COP1, and thus avoid COP1-dependent degradation of the transcription factors CO and HY5 by the proteasome and promotes hypocotyl elongation and floral initiation. Binding to ATP mediates conformational changes which facilitate flavin binding. Interacts with BIC1 in both darkness and light. Interacts with NRP. FAD serves as cofactor. It depends on (6R)-5,10-methylene-5,6,7,8-tetrahydrofolate as a cofactor. Post-translationally, phosphorylated by CK1.3 and CK1.4; in response to blue light. Required for degradation. Adopts an open conformation when phosphorylated upon photoexcitation and thus interacts with signaling partner proteins. Not autophosphorylated, even in complex with FAD cofactor. Ubiquitinated; in response to blue light. As to expression, mostly expressed in the shoot meristems and root tips, and, to a lower extent, in the cotyledons, hypocotyls, and roots.

The protein localises to the nucleus. Its subcellular location is the PML body. It localises to the cytoplasm. Its function is as follows. Photoreceptor that mediates primarily blue light inhibition of hypocotyl elongation and photoperiodic control of floral initiation, and regulates other light responses, including circadian rhythms, tropic growth, stomata opening, guard cell development, root development, bacterial and viral pathogen responses, abiotic stress responses, cell cycles, programmed cell death, apical dominance, fruit and ovule development, seed dormancy, and magnetoreception. Photoexcited cryptochromes interact with signaling partner proteins to alter gene expression at both transcriptional and post-translational levels and, consequently, regulate the corresponding metabolic and developmental programs. Blue-light absorbing flavoprotein that activates reversible flavin photoreduction via an electron transport chain comprising a tryptophan triad (W-321, W-374 and W-397), or via an alternative electron transport that involves small metabolites, including NADPH, NADH, and ATP. The half-life of the activated signaling state is about 16 minutes. Perceives low blue light (LBL) and responds by directly contacting two bHLH transcription factors, PIF4 and PIF5, at chromatin on E-box variant 5'-CA[CT]GTG-3' to promote their activity and stimulate specific gene expression to adapt global physiology (e.g. hypocotyl elongation and hyponastic growth in low blue light). In response to blue light, binds to CIB proteins (e.g. BHLH63/CIB1 and BHLH76/CIB5) to activate transcription and floral initiation. Mediates blue light-induced gene expression, floral initiation and hypocotyl elongation through the interaction with SPA1 that prevents formation of SPA1/COP1 complex but stimulates COP1 binding, and thus inhibits COP1-mediated degradation of transcription factors (e.g. CO and HY5). Promotes flowering time in continuous light (LL). Involved in shortening the circadian clock period, especially at 27 degrees Celsius, in blue light (BL). Required to maintain clock genes expression rhythm. Triggers nuclear accumulation of ROS in response to blue light illumination. Involved in blue light-dependent stomatal opening, transpiration and inhibition of stem and root growth, probably by regulating abscisic acid (ABA). Regulates the timing of flowering by promoting the expression of 'FLOWERING LOCUS T' (FT) in vascular bundles. Negatively regulated by 'FLOWERING LOCUS C' (FLC). General positive regulator of reversible low light-induced chromatin decompaction. Involved in triggering chromatin decondensation during floral transition. Together with phototropins, involved in phototropism regulation by various blue light fluence; blue light attenuates phototropism in high fluence rates (100 umol.m-2.s-1) but enhances phototropism in low fluence rates (&lt;1.0 umol.m-2.s-1). The effect of near-null magnetic field on flowering is altered by changes of blue light cycle and intensity in a CRY1/CRY2-dependent manner. Involved in the strigolactone signaling that regulates hypocotyl growth in response to blue light. Confers resistance to turnip crinkle virus (TCV) by preventing COP1-mediated proteasome-mediated degradation of RPP8/HRT, thus promoting its stability in light. Exposure to darkness or blue-light induces degradation of CRY2, and in turn of RPP8/HRT, resulting in susceptibility to TCV. This is Cryptochrome-2 from Arabidopsis thaliana (Mouse-ear cress).